The sequence spans 864 residues: Dynamin-1 (864 aa).

Residues 28 to 294 (DLDLPQIAVV…LTNHIRDTLP (267 aa)) form the Dynamin-type G domain. The segment at 38 to 45 (GGQSAGKS) is G1 motif. GDP-binding residues include Ser-41, Gly-43, Lys-44, Ser-45, Ser-46, Arg-59, and Gly-60. Positions 64–66 (VTR) are G2 motif. Phosphotyrosine is present on Tyr-80. Tyr-125 is subject to 3'-nitrotyrosine; alternate. Phosphotyrosine; alternate is present on Tyr-125. Residues 136–139 (DLPG) are G3 motif. The interval 205–208 (TKLD) is G4 motif. Positions 206, 208, 211, 236, 237, and 239 each coordinate GDP. Positions 235-238 (VNRS) are G5 motif. A phosphoserine mark is found at Ser-306 and Ser-347. Tyr-354 is modified (phosphotyrosine). Ser-512 is subject to Phosphoserine. A PH domain is found at 519-625 (LVIRKGWLTI…WKASFLRAGV (107 aa)). A GED domain is found at 659 to 750 (VETIRNLVDS…IIGDINTTTV (92 aa)). Positions 767 to 864 (SVPAGRRSPT…PESPRPPFDL (98 aa)) are disordered. Ser-774 is subject to Phosphoserine; by CDK5. Phosphoserine is present on Ser-778. Arg-796 is subject to Omega-N-methylarginine. Ser-822 carries the post-translational modification Phosphoserine. A compositionally biased stretch (pro residues) spans 825–843 (PFGPPPQVPSRPNRAPPGV). Residues Ser-851 and Ser-857 each carry the phosphoserine modification.

This sequence belongs to the TRAFAC class dynamin-like GTPase superfamily. Dynamin/Fzo/YdjA family. In terms of assembly, homodimer; homodimerization is mediated by the dynamin-type G domain which promotes assembly-stimulated GTPase activity. Homo-tetramer formed from two dimers in the absence of lipid. Oligomerizes into a helical polymer that self-assembles around the vesicle membrane, when associated to the menbrane through lipid binding. Interacts (via C-terminal proline-rich domain (PRD)) with SNX9 (via SH3 domain); this interaction allows regulation of DNM1 self-assembly during late stages of endocytic vesicle formation and supports DNM1's early functions in accelerating clathrin-coated pits (CCPs) maturation in non neuronals cell. Interacts (via C-terminal proline-rich domain (PRD)) with MYO1E (via SH3 domain); this interaction regulates receptor-mediated endocytosis. Interacts with SNX33 (via SH3 domain); this interaction decreases DNM1-dependent endocytosis. Interacts with DIAPH1. Interacts with GRB2 (via SH3 domain); this interaction mediates disassembly of DNM1 polymers, therefore modulates self-assembly. Forms a complex with BIN1 (via SH3 domain) and SH3GL2 (via SH3 domain). Forms a complex with SH3GL2 (via SH3 domain) and AMPH (via SH3 domain). Forms a complex with SH3GL2 (via SH3 domain) and SYNJ1. Interacts with AMPH. Interacts (via C-terminal proline-rich domain (PRD)) with SYT1; this interaction facilitates vesicle fission during clathrin-mediated endocytosis (CME). Interacts (via C-terminal proline-rich domain (PRD)) with PLCG1 (via SH3 domain); this interaction stimulates the release of GDP from DNM1 and enhances DNM1-dependent endocytosis. Interacts with SNPH; this interaction inhibits the binding of DNM1 to AMPH and DNM1-receptor-mediated endocytosis. Interacts with CAV1. Interacts with SH3GLB1 (via SH3 domain). Interacts with PACSIN1 (via SH3 domain), PACSIN2 (via SH3 domain) and PACSIN3 (via SH3 domain). Interacts with UNC119; this interaction decreases DNM1's GTPase activity and affects DNM1's interaction with AMPH. Interacts (GTP-bound form) with DNAJC6; this interaction allows clathrin-coated vesicle (CCV) formation at the plasma membrane. In terms of processing, phosphorylation at Ser-774 by GSK3B/GSK3-beta leads to inactivation of receptor-mediated endocytosis in non-neuronal cells. Dephosphorylation at Ser-774, through the EGFR downstream signaling, leads to activation and regulates early stages of clathrin-mediated endocytosis (CME). Phosphorylated by CDK5 leading to synaptic vesicle endocytosis (SVE) activation. As to expression, brain-specific (peripheral sensory neurons).

Its subcellular location is the cytoplasmic vesicle. It localises to the clathrin-coated vesicle. The protein resides in the golgi apparatus. The protein localises to the cell membrane. It is found in the membrane. Its subcellular location is the clathrin-coated pit. It localises to the presynapse. The protein resides in the secretory vesicle. The protein localises to the chromaffin granule. It carries out the reaction GTP + H2O = GDP + phosphate + H(+). Functionally, catalyzes the hydrolysis of GTP and utilizes this energy to mediate vesicle scission and participates in many forms of endocytosis, such as clathrin-mediated endocytosis or synaptic vesicle endocytosis as well as rapid endocytosis (RE). Associates to the membrane, through lipid binding, and self-assembles into rings and stacks of interconnected rings through oligomerization to form a helical polymer around the vesicle membrane leading to constriction of invaginated coated pits around their necks. Self-assembly of the helical polymer induces membrane tubules narrowing until the polymer reaches a length sufficient to trigger GTP hydrolysis. Depending on the curvature imposed on the tubules, membrane detachment from the helical polymer upon GTP hydrolysis can cause spontaneous hemifission followed by complete fission. May play a role in regulating early stages of clathrin-mediated endocytosis in non-neuronal cells through its activation by dephosphorylation via the signaling downstream of EGFR. Controls vesicle size at a step before fission, during formation of membrane pits, at hippocampal synapses. Controls plastic adaptation of the synaptic vesicle recycling machinery to high levels of activity. Mediates rapid endocytosis (RE), a Ca(2+)-dependent and clathrin- and K(+)-independent process in chromaffin cells. Microtubule-associated force-producing protein involved in producing microtubule bundles and able to bind and hydrolyze GTP. Through its interaction with DNAJC6, acts during the early steps of clathrin-coated vesicle (CCV) formation. This Rattus norvegicus (Rat) protein is Dynamin-1 (Dnm1).